Consider the following 234-residue polypeptide: Thymidylate kinase (234 aa).

An ATP-binding site is contributed by 11–18; the sequence is GLEGSGKT.

The protein belongs to the thymidylate kinase family.

It carries out the reaction dTMP + ATP = dTDP + ADP. In terms of biological role, phosphorylation of dTMP to form dTDP in both de novo and salvage pathways of dTTP synthesis. The sequence is that of Thymidylate kinase from Wigglesworthia glossinidia brevipalpis.